The sequence spans 204 residues: MRG/MORF4L-binding protein (204 aa).

The segment covering 1–15 has biased composition (gly residues); sequence MGEAEVGGTGAPGDK. The interval 1 to 27 is disordered; that stretch reads MGEAEVGGTGAPGDKGPGEAAPSPAEE. Residue Gly-2 is modified to N-acetylglycine. Ser-23 carries the post-translational modification Phosphoserine. Lys-127 is covalently cross-linked (Glycyl lysine isopeptide (Lys-Gly) (interchain with G-Cter in SUMO2)). Basic and acidic residues-rich tracts occupy residues 128 to 140 and 153 to 175; these read EEMK…HSGA and ALEK…EGAD. The disordered stretch occupies residues 128 to 204; sequence EEMKEDVDPH…SPSAAKRRRT (77 aa). Low complexity predominate over residues 189–198; the sequence is ANSNPSSPSA. Phosphoserine is present on residues Ser-191 and Ser-195.

This sequence belongs to the EAF7 family. In terms of assembly, component of the NuA4 histone acetyltransferase complex which contains the catalytic subunit KAT5/TIP60 and the subunits EP400, TRRAP/PAF400, BRD8/SMAP, EPC1, DMAP1/DNMAP1, RUVBL1/TIP49, RUVBL2, ING3, actin, ACTL6A/BAF53A, MORF4L1/MRG15, MORF4L2/MRGX, MRGBP, YEATS4/GAS41, VPS72/YL1 and MEAF6. MRGBP may interact directly with MORF4L1/MRG15 and MORF4L2/MRGX.

It localises to the nucleus. Component of the NuA4 histone acetyltransferase (HAT) complex which is involved in transcriptional activation of select genes principally by acetylation of nucleosomal histones H4 and H2A. This modification may both alter nucleosome - DNA interactions and promote interaction of the modified histones with other proteins which positively regulate transcription. This complex may be required for the activation of transcriptional programs associated with oncogene and proto-oncogene mediated growth induction, tumor suppressor mediated growth arrest and replicative senescence, apoptosis, and DNA repair. NuA4 may also play a direct role in DNA repair when recruited to sites of DNA damage. The sequence is that of MRG/MORF4L-binding protein (Mrgbp) from Mus musculus (Mouse).